Consider the following 254-residue polypeptide: tRNA (guanine-N(1)-)-methyltransferase (254 aa).

Residues Gly115 and 135-140 (VGDFVL) each bind S-adenosyl-L-methionine.

It belongs to the RNA methyltransferase TrmD family. As to quaternary structure, homodimer.

The protein resides in the cytoplasm. It carries out the reaction guanosine(37) in tRNA + S-adenosyl-L-methionine = N(1)-methylguanosine(37) in tRNA + S-adenosyl-L-homocysteine + H(+). Specifically methylates guanosine-37 in various tRNAs. This Francisella tularensis subsp. tularensis (strain FSC 198) protein is tRNA (guanine-N(1)-)-methyltransferase.